The following is a 480-amino-acid chain: Aspartyl/glutamyl-tRNA(Asn/Gln) amidotransferase subunit B (480 aa).

Belongs to the GatB/GatE family. GatB subfamily. In terms of assembly, heterotrimer of A, B and C subunits.

The catalysed reaction is L-glutamyl-tRNA(Gln) + L-glutamine + ATP + H2O = L-glutaminyl-tRNA(Gln) + L-glutamate + ADP + phosphate + H(+). It carries out the reaction L-aspartyl-tRNA(Asn) + L-glutamine + ATP + H2O = L-asparaginyl-tRNA(Asn) + L-glutamate + ADP + phosphate + 2 H(+). In terms of biological role, allows the formation of correctly charged Asn-tRNA(Asn) or Gln-tRNA(Gln) through the transamidation of misacylated Asp-tRNA(Asn) or Glu-tRNA(Gln) in organisms which lack either or both of asparaginyl-tRNA or glutaminyl-tRNA synthetases. The reaction takes place in the presence of glutamine and ATP through an activated phospho-Asp-tRNA(Asn) or phospho-Glu-tRNA(Gln). This chain is Aspartyl/glutamyl-tRNA(Asn/Gln) amidotransferase subunit B, found in Streptococcus pneumoniae (strain ATCC 700669 / Spain 23F-1).